The sequence spans 446 residues: Tubulin beta-6 chain (446 aa).

Positions 1 to 4 (MREI) match the MREI motif motif. 6 residues coordinate GTP: Q11, E69, S138, G142, T143, and G144. E69 contacts Mg(2+). S172 is subject to Phosphoserine; by CDK1. GTP contacts are provided by N204 and N226. Position 438 is a 5-glutamyl polyglutamate (E438).

This sequence belongs to the tubulin family. In terms of assembly, dimer of alpha and beta chains. A typical microtubule is a hollow water-filled tube with an outer diameter of 25 nm and an inner diameter of 15 nM. Alpha-beta heterodimers associate head-to-tail to form protofilaments running lengthwise along the microtubule wall with the beta-tubulin subunit facing the microtubule plus end conferring a structural polarity. Microtubules usually have 13 protofilaments but different protofilament numbers can be found in some organisms and specialized cells. It depends on Mg(2+) as a cofactor. Post-translationally, some glutamate residues at the C-terminus are polyglycylated, resulting in polyglycine chains on the gamma-carboxyl group. Glycylation is mainly limited to tubulin incorporated into axonemes (cilia and flagella) whereas glutamylation is prevalent in neuronal cells, centrioles, axonemes, and the mitotic spindle. Both modifications can coexist on the same protein on adjacent residues, and lowering polyglycylation levels increases polyglutamylation, and reciprocally. Cilia and flagella glycylation is required for their stability and maintenance. Flagella glycylation controls sperm motility. In terms of processing, some glutamate residues at the C-terminus are polyglutamylated, resulting in polyglutamate chains on the gamma-carboxyl group. Polyglutamylation plays a key role in microtubule severing by spastin (SPAST). SPAST preferentially recognizes and acts on microtubules decorated with short polyglutamate tails: severing activity by SPAST increases as the number of glutamates per tubulin rises from one to eight, but decreases beyond this glutamylation threshold. Glutamylation is also involved in cilia motility. Phosphorylated on Ser-172 by CDK1 during the cell cycle, from metaphase to telophase, but not in interphase. This phosphorylation inhibits tubulin incorporation into microtubules.

The protein localises to the cytoplasm. Its subcellular location is the cytoskeleton. Tubulin is the major constituent of microtubules, a cylinder consisting of laterally associated linear protofilaments composed of alpha- and beta-tubulin heterodimers. Microtubules grow by the addition of GTP-tubulin dimers to the microtubule end, where a stabilizing cap forms. Below the cap, tubulin dimers are in GDP-bound state, owing to GTPase activity of alpha-tubulin. This chain is Tubulin beta-6 chain (TUBB6), found in Bos taurus (Bovine).